We begin with the raw amino-acid sequence, 398 residues long: Signal-regulatory protein beta-1 (398 aa).

Positions 1–29 (MPVPASWPHLPSPFLLMTLLLGRLTGVAG) are cleaved as a signal peptide. The region spanning 30–136 (EDELQVIQPE…SPDDVEFKSG (107 aa)) is the Ig-like V-type domain. The Extracellular portion of the chain corresponds to 30–371 (EDELQVIQPE…EAALAPTAPL (342 aa)). 2 cysteine pairs are disulfide-bonded: Cys-54–Cys-120 and Cys-169–Cys-227. Ig-like C1-type domains follow at residues 147–246 (PSAP…ANLS) and 253–347 (PTLE…YALE). 3 N-linked (GlcNAc...) asparagine glycosylation sites follow: Asn-244, Asn-269, and Asn-291. Residues 372–392 (LVALLLGPKLLLVVGVSAIYI) form a helical membrane-spanning segment. Over 393 to 398 (CWKQKA) the chain is Cytoplasmic.

As to quaternary structure, homodimer; disulfide-linked. Interacts with TYROBP. This interaction results in the recruitment of SYK. N-glycosylated. As to expression, detected in monocytes and dendritic cells.

The protein localises to the cell membrane. In terms of biological role, immunoglobulin-like cell surface receptor involved in the negative regulation of receptor tyrosine kinase-coupled signaling processes. Also participates in the recruitment of tyrosine kinase SYK. Triggers activation of myeloid cells when associated with TYROBP. This Homo sapiens (Human) protein is Signal-regulatory protein beta-1 (SIRPB1).